The following is a 445-amino-acid chain: CBL-interacting serine/threonine-protein kinase 8 (445 aa).

One can recognise a Protein kinase domain in the interval tyrosine 9 to phenylalanine 262. ATP-binding positions include isoleucine 15–valine 23 and lysine 38. Aspartate 132 functions as the Proton acceptor in the catalytic mechanism. Positions aspartate 150–glutamate 177 are activation loop. The residue at position 154 (serine 154) is a Phosphoserine. At threonine 166 the chain carries Phosphothreonine. An NAF domain is found at threonine 302–aspartate 326. The interval lysine 333–threonine 362 is PPI.

Belongs to the protein kinase superfamily. CAMK Ser/Thr protein kinase family. SNF1 subfamily. Interacts with CBL1 and CBL9. Mn(2+) serves as cofactor. As to expression, mostly expressed in roots, and, to a lower extent, in leaves, stems, flowers, and siliques.

The catalysed reaction is L-seryl-[protein] + ATP = O-phospho-L-seryl-[protein] + ADP + H(+). It carries out the reaction L-threonyl-[protein] + ATP = O-phospho-L-threonyl-[protein] + ADP + H(+). In terms of biological role, CIPK serine-threonine protein kinases interact with CBL proteins. Binding of a CBL protein to the regulatory NAF domain of CIPK protein lead to the activation of the kinase in a calcium-dependent manner. The protein is CBL-interacting serine/threonine-protein kinase 8 (CIPK8) of Arabidopsis thaliana (Mouse-ear cress).